The primary structure comprises 199 residues: Regulator of G-protein signaling 16 (199 aa).

2 S-palmitoyl cysteine lipidation sites follow: Cys-2 and Cys-12. In terms of domain architecture, RGS spans 64–180 (SFQSLLNSKN…LKSPAYRDLA (117 aa)). Tyr-167 and Tyr-176 each carry phosphotyrosine.

Interacts with GNAI1 and GNAQ. Interacts with GNAI3, GNAI3 and GNAO1. In terms of processing, palmitoylated on Cys-2 and/or Cys-12. Phosphorylated. Phosphorylation at Tyr-167 by EGFR enhances GTPase accelerating (GAP) activity toward GNAI1. As to expression, predominantly found in the retina. Some expression has been found in the liver.

Its subcellular location is the membrane. Functionally, regulates G protein-coupled receptor signaling cascades. Inhibits signal transduction by increasing the GTPase activity of G protein alpha subunits, thereby driving them into their inactive GDP-bound form. Plays an important role in the phototransduction cascade by regulating the lifetime and effective concentration of activated transducin alpha. May regulate extra and intracellular mitogenic signals. The polypeptide is Regulator of G-protein signaling 16 (Rgs16) (Rattus norvegicus (Rat)).